We begin with the raw amino-acid sequence, 215 residues long: Protein Syd (215 aa).

The protein belongs to the Syd family.

It localises to the cell inner membrane. Its function is as follows. Interacts with the SecY protein in vivo. May bind preferentially to an uncomplexed state of SecY, thus functioning either as a chelating agent for excess SecY in the cell or as a regulatory factor that negatively controls the translocase function. The polypeptide is Protein Syd (Shewanella piezotolerans (strain WP3 / JCM 13877)).